The following is a 122-amino-acid chain: Large ribosomal subunit protein uL14c (122 aa).

Belongs to the universal ribosomal protein uL14 family. As to quaternary structure, part of the 50S ribosomal subunit.

The protein resides in the plastid. It localises to the chloroplast. Binds to 23S rRNA. The polypeptide is Large ribosomal subunit protein uL14c (Chloranthus spicatus (Chulantree)).